The chain runs to 325 residues: Elongation factor P--(R)-beta-lysine ligase (325 aa).

76 to 78 (SPE) serves as a coordination point for substrate. ATP contacts are provided by residues 100-102 (RNE) and N109. Y118 is a substrate binding site. 244–245 (EL) provides a ligand contact to ATP. A substrate-binding site is contributed by E251. G300 is a binding site for ATP.

Belongs to the class-II aminoacyl-tRNA synthetase family. EpmA subfamily. As to quaternary structure, homodimer.

The catalysed reaction is D-beta-lysine + L-lysyl-[protein] + ATP = N(6)-((3R)-3,6-diaminohexanoyl)-L-lysyl-[protein] + AMP + diphosphate + H(+). Functionally, with EpmB is involved in the beta-lysylation step of the post-translational modification of translation elongation factor P (EF-P) on 'Lys-34'. Catalyzes the ATP-dependent activation of (R)-beta-lysine produced by EpmB, forming a lysyl-adenylate, from which the beta-lysyl moiety is then transferred to the epsilon-amino group of EF-P 'Lys-34'. In Salmonella agona (strain SL483), this protein is Elongation factor P--(R)-beta-lysine ligase.